Consider the following 279-residue polypeptide: Beta-lactamase (279 aa).

A signal peptide spans 1-21 (MRYVRLCVISLLATLPLVVYA). Serine 66 functions as the Acyl-ester intermediate in the catalytic mechanism. The cysteines at positions 73 and 119 are disulfide-linked. 230 to 232 (KTG) is a substrate binding site.

It belongs to the class-A beta-lactamase family.

The enzyme catalyses a beta-lactam + H2O = a substituted beta-amino acid. This chain is Beta-lactamase, found in Klebsiella pneumoniae.